We begin with the raw amino-acid sequence, 257 residues long: 5'-nucleotidase SurE (257 aa).

The a divalent metal cation site is built by aspartate 9, aspartate 10, serine 40, and asparagine 93.

Belongs to the SurE nucleotidase family. It depends on a divalent metal cation as a cofactor.

The protein resides in the cytoplasm. It catalyses the reaction a ribonucleoside 5'-phosphate + H2O = a ribonucleoside + phosphate. Its function is as follows. Nucleotidase that shows phosphatase activity on nucleoside 5'-monophosphates. This Campylobacter hominis (strain ATCC BAA-381 / DSM 21671 / CCUG 45161 / LMG 19568 / NCTC 13146 / CH001A) protein is 5'-nucleotidase SurE.